Reading from the N-terminus, the 363-residue chain is Flagellar P-ring protein (363 aa).

An N-terminal signal peptide occupies residues 1–18 (MWKKVLIAIVFITSFSFA).

The protein belongs to the FlgI family. In terms of assembly, the basal body constitutes a major portion of the flagellar organelle and consists of four rings (L,P,S, and M) mounted on a central rod.

It localises to the periplasm. The protein localises to the bacterial flagellum basal body. In terms of biological role, assembles around the rod to form the L-ring and probably protects the motor/basal body from shearing forces during rotation. This Sulfurihydrogenibium sp. (strain YO3AOP1) protein is Flagellar P-ring protein.